The primary structure comprises 310 residues: Major allergen Asp f 2 (310 aa).

A signal peptide spans 1–16; it reads MAALLRLAVLLPLAAP. 4 N-linked (GlcNAc...) asparagine glycosylation sites follow: N57, N87, N143, and N216. The disordered stretch occupies residues 247-310; sequence AGESHGPDQG…THEGGQLHCT (64 aa). Positions 258–292 are enriched in low complexity; that stretch reads DTGSASAPASTSTSSSSSGSGSGATTTPTDSPSAT. Residues 300-310 are compositionally biased toward basic and acidic residues; that stretch reads HTHEGGQLHCT.

Belongs to the ZPS1 family.

The protein localises to the secreted. The chain is Major allergen Asp f 2 from Aspergillus fumigatus (strain ATCC MYA-4609 / CBS 101355 / FGSC A1100 / Af293) (Neosartorya fumigata).